Here is a 520-residue protein sequence, read N- to C-terminus: Calcium-dependent protein kinase 25 (520 aa).

Gly-2 is lipidated: N-myristoyl glycine. The interval 31–87 (PLKPQLQDKPPQPMLMNKDDDKTKLNDTHGDPKLLEGKEKPAQKQTSQGQGGRKCSD) is disordered. Residues 47–72 (NKDDDKTKLNDTHGDPKLLEGKEKPA) show a composition bias toward basic and acidic residues. In terms of domain architecture, Protein kinase spans 132 to 390 (YNLGSKLGHG…AQQVLCHPWI (259 aa)). ATP-binding positions include 138–146 (LGHGQFGTT) and Lys-161. Catalysis depends on Asp-256, which acts as the Proton acceptor. Position 296 is a phosphoserine (Ser-296). The interval 396–426 (APDTPLDTTVLSRLKKFSATDKLKKMALRVI) is autoinhibitory domain. The region spanning 433 to 468 (EEIHELRETFKTIDSGKSGRVTYKELKNGLERFNTN) is the EF-hand 1 domain. Positions 446, 450, 452, 457, 483, 487, 489, and 494 each coordinate Ca(2+). The region spanning 469 to 505 (LDNSDINSLMQIPTDVHLEDTVDYNEFIEAIVRLRQI) is the EF-hand 2; degenerate domain.

Belongs to the protein kinase superfamily. Ser/Thr protein kinase family. CDPK subfamily.

The protein localises to the membrane. The catalysed reaction is L-seryl-[protein] + ATP = O-phospho-L-seryl-[protein] + ADP + H(+). It catalyses the reaction L-threonyl-[protein] + ATP = O-phospho-L-threonyl-[protein] + ADP + H(+). With respect to regulation, activated by calcium. Autophosphorylation may play an important role in the regulation of the kinase activity. Functionally, may play a role in signal transduction pathways that involve calcium as a second messenger. In Arabidopsis thaliana (Mouse-ear cress), this protein is Calcium-dependent protein kinase 25 (CPK25).